A 339-amino-acid chain; its full sequence is Ribosomal RNA small subunit methyltransferase H (339 aa).

S-adenosyl-L-methionine contacts are provided by residues 44-46, D61, F88, D105, and Q112; that span reads GGY. Residues 263-312 are disordered; it reads PQAQSRHLPEKAAAQPVFEKPMKPVSPGEAETAENPRARSAHLRAARRTA. Basic residues predominate over residues 301–312; that stretch reads RSAHLRAARRTA.

This sequence belongs to the methyltransferase superfamily. RsmH family.

The protein resides in the cytoplasm. The catalysed reaction is cytidine(1402) in 16S rRNA + S-adenosyl-L-methionine = N(4)-methylcytidine(1402) in 16S rRNA + S-adenosyl-L-homocysteine + H(+). Specifically methylates the N4 position of cytidine in position 1402 (C1402) of 16S rRNA. The sequence is that of Ribosomal RNA small subunit methyltransferase H from Chelativorans sp. (strain BNC1).